The chain runs to 61 residues: UPF0181 protein Ent638_2380 (61 aa).

It belongs to the UPF0181 family.

This is UPF0181 protein Ent638_2380 from Enterobacter sp. (strain 638).